A 420-amino-acid chain; its full sequence is Protein disulfide isomerase Creld1 (420 aa).

Positions 1 to 29 are cleaved as a signal peptide; sequence MAPQPLRGLVPFLLWCLSLFLSLPGPVWL. Residues 30 to 362 are Extracellular-facing; that stretch reads QPSPPPHSAP…GFFAEMTEDE (333 aa). The CXXC signature appears at 46-49; the sequence is CHTC. Cystine bridges form between cysteine 46–cysteine 49, cysteine 155–cysteine 169, cysteine 163–cysteine 181, and cysteine 183–cysteine 192. The EGF-like 1 domain occupies 153-193; that stretch reads LPCPGGTERPCGGYGQCEGEGTRGGSGHCDCQAGYGGEACG. A glycan (N-linked (GlcNAc...) asparagine) is linked at asparagine 205. FU repeat units lie at residues 208-255 and 268-315; these read HLVC…EQAT and SYEC…VVCP. The short motif at 278-281 is the CXXC element; sequence CLGC. 4 disulfide bridges follow: cysteine 278/cysteine 281, cysteine 309/cysteine 321, cysteine 314/cysteine 330, and cysteine 332/cysteine 343. The EGF-like 2; calcium-binding domain occupies 305–342; it reads DVDECETVVCPGENEQCENTEGSYRCVCAEGFRQEDGI. The helical transmembrane segment at 363-383 threads the bilayer; that stretch reads MVVLQQMFFGVIICALATLAA. Lysine 384 is a topological domain (cytoplasmic). The helical transmembrane segment at 385–405 threads the bilayer; the sequence is GDLVFTAIFIGAVAAMTGYWL. Residues 406–420 lie on the Extracellular side of the membrane; the sequence is SERSDRVLEGFIKGR.

Belongs to the CRELD family.

The protein localises to the membrane. It carries out the reaction Catalyzes the rearrangement of -S-S- bonds in proteins.. Protein disulfide isomerase. Promotes the localization of acetylcholine receptors (AChRs) to the plasma membrane. In Rattus norvegicus (Rat), this protein is Protein disulfide isomerase Creld1 (Creld1).